Reading from the N-terminus, the 104-residue chain is Large ribosomal subunit protein uL24 (104 aa).

It belongs to the universal ribosomal protein uL24 family. Part of the 50S ribosomal subunit.

Functionally, one of two assembly initiator proteins, it binds directly to the 5'-end of the 23S rRNA, where it nucleates assembly of the 50S subunit. Its function is as follows. One of the proteins that surrounds the polypeptide exit tunnel on the outside of the subunit. This is Large ribosomal subunit protein uL24 from Treponema denticola (strain ATCC 35405 / DSM 14222 / CIP 103919 / JCM 8153 / KCTC 15104).